A 93-amino-acid chain; its full sequence is Large ribosomal subunit protein eL37A (93 aa).

Zn(2+)-binding residues include cysteine 19, cysteine 22, cysteine 34, and cysteine 37. A C4-type zinc finger spans residues 19–37; that stretch reads CRRCGRSSYHIQKSTCAQC.

The protein belongs to the eukaryotic ribosomal protein eL37 family. Requires Zn(2+) as cofactor.

Binds to the 23S rRNA. The protein is Large ribosomal subunit protein eL37A of Drosophila melanogaster (Fruit fly).